The sequence spans 427 residues: Adenylosuccinate synthetase (427 aa).

Residues 12–18 and 40–42 contribute to the GTP site; these read GDEGKGK and GHT. Asp-13 (proton acceptor) is an active-site residue. The Mg(2+) site is built by Asp-13 and Gly-40. IMP contacts are provided by residues 13–16, 38–41, Thr-128, Arg-142, Gln-223, Thr-238, and Arg-302; these read DEGK and NAGH. His-41 functions as the Proton donor in the catalytic mechanism. 298 to 304 lines the substrate pocket; the sequence is VTTGRAR. Residues Arg-304, 330 to 332, and 412 to 414 each bind GTP; these read KLD and GVG.

This sequence belongs to the adenylosuccinate synthetase family. Homodimer. It depends on Mg(2+) as a cofactor.

It is found in the cytoplasm. It catalyses the reaction IMP + L-aspartate + GTP = N(6)-(1,2-dicarboxyethyl)-AMP + GDP + phosphate + 2 H(+). The protein operates within purine metabolism; AMP biosynthesis via de novo pathway; AMP from IMP: step 1/2. Its function is as follows. Plays an important role in the de novo pathway of purine nucleotide biosynthesis. Catalyzes the first committed step in the biosynthesis of AMP from IMP. This is Adenylosuccinate synthetase from Frankia casuarinae (strain DSM 45818 / CECT 9043 / HFP020203 / CcI3).